We begin with the raw amino-acid sequence, 95 residues long: Large ribosomal subunit protein uL23 (95 aa).

This sequence belongs to the universal ribosomal protein uL23 family. Part of the 50S ribosomal subunit. Contacts protein L29, and trigger factor when it is bound to the ribosome.

Its function is as follows. One of the early assembly proteins it binds 23S rRNA. One of the proteins that surrounds the polypeptide exit tunnel on the outside of the ribosome. Forms the main docking site for trigger factor binding to the ribosome. This is Large ribosomal subunit protein uL23 from Syntrophotalea carbinolica (strain DSM 2380 / NBRC 103641 / GraBd1) (Pelobacter carbinolicus).